The sequence spans 274 residues: Large ribosomal subunit protein uL2 (274 aa).

Positions 195-274 are disordered; it reads VGNSDHGLES…SKYIIERRKK (80 aa). 2 stretches are compositionally biased toward basic residues: residues 209 to 220 and 244 to 264; these read GRSRWQGRRPRN and PRSR…KKQS.

The protein belongs to the universal ribosomal protein uL2 family. Part of the 50S ribosomal subunit. Forms a bridge to the 30S subunit in the 70S ribosome.

One of the primary rRNA binding proteins. Required for association of the 30S and 50S subunits to form the 70S ribosome, for tRNA binding and peptide bond formation. It has been suggested to have peptidyltransferase activity; this is somewhat controversial. Makes several contacts with the 16S rRNA in the 70S ribosome. The polypeptide is Large ribosomal subunit protein uL2 (Bacteroides fragilis (strain ATCC 25285 / DSM 2151 / CCUG 4856 / JCM 11019 / LMG 10263 / NCTC 9343 / Onslow / VPI 2553 / EN-2)).